Reading from the N-terminus, the 132-residue chain is Acetylcholinesterase (132 aa).

A glycan (N-linked (GlcNAc...) asparagine) is linked at asparagine 37. Cysteine 45 and cysteine 72 are joined by a disulfide.

The protein belongs to the type-B carboxylesterase/lipase family.

It is found in the synapse. Its subcellular location is the secreted. The protein resides in the cell membrane. It catalyses the reaction acetylcholine + H2O = choline + acetate + H(+). Functionally, rapidly hydrolyzes choline released into the synapse. This Culex pipiens pipiens (Northern house mosquito) protein is Acetylcholinesterase (ACE-1).